A 1256-amino-acid polypeptide reads, in one-letter code: Splicing factor, arginine/serine-rich 19 (1256 aa).

6 disordered regions span residues 1–33 (MEEE…SPSA), 158–343 (GKTV…APRR), 371–395 (ALSL…PEEE), 408–1030 (PRQP…TLPP), 1112–1152 (GSLP…DKYL), and 1221–1256 (FRKH…LPPL). Residues 7 to 27 (SRGKTEESGEDRGDGPPDRDP) are compositionally biased toward basic and acidic residues. A compositionally biased stretch (low complexity) spans 192–206 (SSASSSPSPSPSSSS). Residues 207–222 (PSPPPPPPPPPPPALP) are compositionally biased toward pro residues. The span at 227-236 (DIYDPFHPTD) shows a compositional bias: basic and acidic residues. S240 is modified (phosphoserine). Over residues 255–265 (TGSNPSSSAGT) the composition is skewed to polar residues. Residues 268-282 (PEEEEEEEEEEEEEG) are compositionally biased toward acidic residues. T328 carries the phosphothreonine modification. Residues 382–393 (PEIEEGEIVQPE) show a composition bias toward acidic residues. The segment covering 412–424 (PASVATLASVAAP) has biased composition (low complexity). Residues S442 and S447 each carry the phosphoserine modification. Over residues 478–489 (KILTQRRERYRQ) the composition is skewed to basic residues. Phosphoserine is present on residues S491, S493, S510, S518, and S520. 2 stretches are compositionally biased toward basic residues: residues 538-553 (TARR…RSRS) and 560-577 (RGGH…RRRS). 2 positions are modified to phosphoserine: S577 and S579. Positions 592 to 611 (RERHRGKRREGGKKKKKRSR) are enriched in basic residues. The span at 612–623 (SRAEKRSGDLEK) shows a compositional bias: basic and acidic residues. T663 is modified (phosphothreonine). A phosphoserine mark is found at S676 and S682. Y689 is modified (phosphotyrosine). Phosphoserine is present on residues S691 and S695. 2 stretches are compositionally biased toward basic and acidic residues: residues 696–709 (ADER…DRRR) and 719–741 (SREK…DRSS). 2 stretches are compositionally biased toward low complexity: residues 752–775 (PGSG…SCSS) and 793–804 (SSTTPAKDSSSS). Residue K812 forms a Glycyl lysine isopeptide (Lys-Gly) (interchain with G-Cter in SUMO2) linkage. Positions 813–831 (FSRDRESRSPFLKPDERAP) are enriched in basic and acidic residues. S819 and S821 each carry phosphoserine. Over residues 843–875 (KPKKTKAKAKAGAKKAKGTKGKTKPSKTRKKVR) the composition is skewed to basic residues. Phosphoserine is present on residues S876, S883, S910, and S912. Residues 922–935 (STPPPKVAPPPPAL) show a composition bias toward pro residues. Phosphothreonine is present on residues T923 and T936. The span at 938–947 (DSQTVDSSCK) shows a compositional bias: polar residues. S939 is subject to Phosphoserine. T948 carries the post-translational modification Phosphothreonine. Acidic residues predominate over residues 969–984 (EEEEEEEEEEEEEEEQ). The span at 985–1017 (QPATTTATSTAAAAPSTAPSAGSTAGDSGAEDG) shows a compositional bias: low complexity. The tract at residues 1131–1256 (PASDKREGSS…GGPGLPLPPL (126 aa)) is necessary for interaction with the CTD domain of POLR2A. Over residues 1133 to 1152 (SDKREGSSSSEGRGDTDKYL) the composition is skewed to basic and acidic residues. The segment covering 1244–1256 (PDKGGPGLPLPPL) has biased composition (pro residues).

It belongs to the splicing factor SR family. In terms of assembly, interacts with POLR2A.

It localises to the nucleus. In terms of biological role, may function in pre-mRNA splicing. The chain is Splicing factor, arginine/serine-rich 19 (Scaf1) from Mus musculus (Mouse).